We begin with the raw amino-acid sequence, 155 residues long: Small ribosomal subunit protein uS7c (155 aa).

This sequence belongs to the universal ribosomal protein uS7 family. Part of the 30S ribosomal subunit.

The protein localises to the plastid. It is found in the chloroplast. Its function is as follows. One of the primary rRNA binding proteins, it binds directly to 16S rRNA where it nucleates assembly of the head domain of the 30S subunit. The polypeptide is Small ribosomal subunit protein uS7c (rps7) (Lilium superbum (Turk's cap lily)).